Consider the following 555-residue polypeptide: Glutamine--tRNA ligase (555 aa).

The 'HIGH' region motif lies at 34–44 (PEPNGYLHIGH). ATP-binding positions include 35–37 (EPN) and 41–47 (HIGHAKS). L-glutamine contacts are provided by aspartate 67 and tyrosine 212. Residues threonine 231, 261–262 (RL), and 269–271 (MSK) each bind ATP. The short motif at 268 to 272 (VMSKR) is the 'KMSKS' region element. Residues 317–324 (TKQDNTIE) form an interaction with tRNA region.

This sequence belongs to the class-I aminoacyl-tRNA synthetase family. Monomer.

Its subcellular location is the cytoplasm. The enzyme catalyses tRNA(Gln) + L-glutamine + ATP = L-glutaminyl-tRNA(Gln) + AMP + diphosphate. The chain is Glutamine--tRNA ligase from Salmonella agona (strain SL483).